The sequence spans 512 residues: Cytochrome P450 monooxygenase astB (512 aa).

The chain crosses the membrane as a helical span at residues 5–25; the sequence is DLSFPAAIGAVFGAVAISVAA. Cys-452 contributes to the heme binding site.

It belongs to the cytochrome P450 family. Heme is required as a cofactor.

It is found in the membrane. It participates in secondary metabolite biosynthesis; terpenoid biosynthesis. In terms of biological role, cytochrome P450 monooxygenase; part of the gene cluster that mediates the biosynthesis of the sesquiterpenoid aspterric acid (AA), an inhibitor of dihydroxy-acid dehydratase (DHAD) effective as an herbicide. AstB catalyzes the second step within the pathway and converts (-)-daucane produced by the terpene cyclase astA into an alpha-epoxy carboxylate intermediate which is further converted into the tricyclic aspterric acid by the cytochrome P450 monooxygenase astC. This Aspergillus terreus (strain NIH 2624 / FGSC A1156) protein is Cytochrome P450 monooxygenase astB.